We begin with the raw amino-acid sequence, 249 residues long: Segregation and condensation protein A (249 aa).

It belongs to the ScpA family. As to quaternary structure, component of a cohesin-like complex composed of ScpA, ScpB and the Smc homodimer, in which ScpA and ScpB bind to the head domain of Smc. The presence of the three proteins is required for the association of the complex with DNA.

It is found in the cytoplasm. Participates in chromosomal partition during cell division. May act via the formation of a condensin-like complex containing Smc and ScpB that pull DNA away from mid-cell into both cell halves. The sequence is that of Segregation and condensation protein A from Listeria welshimeri serovar 6b (strain ATCC 35897 / DSM 20650 / CCUG 15529 / CIP 8149 / NCTC 11857 / SLCC 5334 / V8).